Here is a 190-residue protein sequence, read N- to C-terminus: DNA-invertase hin (190 aa).

A Resolvase/invertase-type recombinase catalytic domain is found at 2 to 135 (ATIGYIRVST…AGLAAARAQG (134 aa)). S10 serves as the catalytic O-(5'-phospho-DNA)-serine intermediate. A DNA-binding region (H-T-H motif) is located at residues 162–181 (RQQLAIIFGIGVSTLYRYFP).

This sequence belongs to the site-specific recombinase resolvase family.

Its function is as follows. A DNA fragment of approximately 900 base pairs, adjacent to the fljB (H2) gene, which specifies the synthesis of phase-2 flagellin, can exist in either orientation with respect to fljB. The orientation of the inversion region controls expression of fljB. The hin gene occupies about two-thirds of the inversion region; it is required for the inversion of the fljB controlling region. This chain is DNA-invertase hin (hin), found in Salmonella typhimurium (strain LT2 / SGSC1412 / ATCC 700720).